Reading from the N-terminus, the 325-residue chain is mRNA decay factor CTH1 (325 aa).

2 C3H1-type zinc fingers span residues 204-232 (LYKTELCESFTIKGYCKYGNKCQFAHGLN) and 242-270 (NYRTKPCINWSKLGYCPYGKRCCFKHGDD). Residues 284 to 306 (SKDTALTPLPTSLAPSNNDNITN) form a disordered region. A compositionally biased stretch (polar residues) spans 292-306 (LPTSLAPSNNDNITN).

In terms of biological role, binds to specific AU-rich elements (ARE) in the 3'-untranslated region of target mRNAs and promotes their degradation. In response to iron deficiency, promotes the decay of many mRNAs encoding proteins involved in iron-dependent pathways. Negatively regulates primarily iron-dependent mitochondrial processes including respiration and amino acid biosynthesis. This chain is mRNA decay factor CTH1 (CTH1), found in Saccharomyces cerevisiae (strain ATCC 204508 / S288c) (Baker's yeast).